Reading from the N-terminus, the 262-residue chain is MIHETAKIHPAAVIEGDVTIGANVTVGPFTYIAGNVTIGDDTEVMSHVVIKGHTTIGKQNRIFPHAVIGEENQDKKYGGEDTTVVIGDRNVIREAVQIHRGTTQDKATTVIGDDNLLCVNAHVAHDVIVGNHTHIGNNAILGGHVTVGDYAGVMALSAIHPFCSIGAYAYIGGCSAVVQDVLPYVLAQGNHAAPFGLNLVGLKRNGFEKPEIRALQKAYKELYRSGKTLEEAKAALVEMAKEFASVTPMLEMLESSERGIIR.

The protein belongs to the transferase hexapeptide repeat family. LpxA subfamily. In terms of assembly, homotrimer.

It is found in the cytoplasm. It carries out the reaction a (3R)-hydroxyacyl-[ACP] + UDP-N-acetyl-alpha-D-glucosamine = a UDP-3-O-[(3R)-3-hydroxyacyl]-N-acetyl-alpha-D-glucosamine + holo-[ACP]. Its pathway is glycolipid biosynthesis; lipid IV(A) biosynthesis; lipid IV(A) from (3R)-3-hydroxytetradecanoyl-[acyl-carrier-protein] and UDP-N-acetyl-alpha-D-glucosamine: step 1/6. Involved in the biosynthesis of lipid A, a phosphorylated glycolipid that anchors the lipopolysaccharide to the outer membrane of the cell. This Vibrio atlanticus (strain LGP32) (Vibrio splendidus (strain Mel32)) protein is Acyl-[acyl-carrier-protein]--UDP-N-acetylglucosamine O-acyltransferase.